The following is a 341-amino-acid chain: Ferredoxin--NADP reductase 2 (341 aa).

Residues Asp-42, Gln-50, Tyr-55, Ile-95, Phe-129, Asp-294, and Ser-335 each coordinate FAD.

Belongs to the ferredoxin--NADP reductase type 2 family. In terms of assembly, homodimer. It depends on FAD as a cofactor.

It carries out the reaction 2 reduced [2Fe-2S]-[ferredoxin] + NADP(+) + H(+) = 2 oxidized [2Fe-2S]-[ferredoxin] + NADPH. The polypeptide is Ferredoxin--NADP reductase 2 (Chloroherpeton thalassium (strain ATCC 35110 / GB-78)).